Here is a 984-residue protein sequence, read N- to C-terminus: Shutoff protein (984 aa).

A disordered region spans residues 131-231 (GVAAESDPSD…DLERDALVAP (101 aa)). Positions 137–147 (DPSDDEPDPEP) are enriched in acidic residues. Positions 148–159 (EYDHREADHDSD) are enriched in basic and acidic residues. Residues 176–186 (VDEEPQDDSPS) show a composition bias toward acidic residues. A compositionally biased stretch (polar residues) spans 190 to 202 (TASTVIEEAQTSA). The segment covering 205–216 (DSHDDDTHRDDG) has biased composition (basic and acidic residues). The tract at residues 411 to 476 (LMETLLQPFA…AVRYTATLEL (66 aa)) is binding to host EIF4G. Residues 479 to 597 (RVFREPSMVK…RLYSLPNPTA (119 aa)) enclose the RRM domain. Disordered stretches follow at residues 810 to 853 (GVYK…GNRA) and 876 to 984 (KVGP…RQEE). Position 812 is a phosphotyrosine; by host (Tyr812). Positions 913-923 (AGGRRFGRRNT) are enriched in basic residues. Residues 945–958 (RGQQGEHPTTSPSA) are compositionally biased toward low complexity.

It belongs to the adenoviridae shutoff protein family. As to quaternary structure, monomer. Interacts with hexon protein; this interaction allows chaperoning and trimerization of hexon proteins. Interacts (via N-terminus) with host initiation factor EIF4G (via C-terminus). Interacts (via RRM domain) with viral mRNAs that contain the tripartite leader; this interaction allows ribosome shunting and expression of viral late mRNAs. Post-translationally, might be cleaved by the viral protease. In terms of processing, phosphorylated. Tyrosine phosphorylation enhances preferential binding to tripartite leader mRNAs and allows ribosome shunting. Methylated. Asymmetric dimethylation by host PRMT1 of the Arg/Gly-rich region may regulate shutoff protein binding to hexon and promote the capsid assembly in the nucleus.

Its subcellular location is the host cytoplasm. In terms of biological role, protein that inhibits host translation while promoting late viral translation by ribosome shunting. Blocks host cap-dependent translation by binding to eIF4G, displacing MKNK1 from cap initiation complexes and preventing EIF4E phosphorylation. Binds to the tripartite leader sequence of viral late mRNAs and recruits host eIF4G, PABPC1/poly-A binding protein and 40S ribosomes subunits on viral mRNAs, allowing ribosome shunting and efficient translation of late viral mRNAs even though conventional translation via ribosome scanning from the cap has been shut off in the host cell. During assembly, acts as a chaperone protein that helps hexon proteins assembly into trimers. The chain is Shutoff protein from Galliformes (FAdV-1).